A 271-amino-acid chain; its full sequence is Aquaporin-2 (271 aa).

Residues 1 to 11 are Cytoplasmic-facing; sequence MWELRSIAFSR. The helical transmembrane segment at 12–32 threads the bilayer; sequence AVFAEFLATLLFVFFGLGSAL. Residues 33-40 are Extracellular-facing; it reads NWPQALPS. The helical transmembrane segment at 41–59 threads the bilayer; sequence VLQIAMAFGLGIGTLVQAL. Residues 60 to 64 are Cytoplasmic-facing; that stretch reads GHISG. Residues 65 to 74 constitute an intramembrane region (discontinuously helical); the sequence is AHINPAVTVA. An NPA 1 motif is present at residues 68-70; it reads NPA. The Cytoplasmic portion of the chain corresponds to 75-85; that stretch reads CLVGCHVSVLR. Residues 86 to 107 form a helical membrane-spanning segment; sequence AAFYVAAQLLGAVAGAALLHEI. The Extracellular segment spans residues 108-127; that stretch reads TPADIRGDLAVNALSNSTTA. Asparagine 123 is a glycosylation site (N-linked (GlcNAc...) asparagine). The helical transmembrane segment at 128 to 148 threads the bilayer; sequence GQAVTVELFLTLQLVLCIFAS. At 149–156 the chain is on the cytoplasmic side; sequence TDERRGEN. The helical transmembrane segment at 157–176 threads the bilayer; sequence PGTPALSIGFSVALGHLLGI. Topologically, residues 177-180 are extracellular; the sequence is HYTG. An intramembrane region (discontinuously helical) is located at residues 181-193; it reads CSMNPARSLAPAV. The short motif at 184-186 is the NPA 2 element; it reads NPA. Residues 194-201 lie on the Extracellular side of the membrane; that stretch reads VTGKFDDH. The helical transmembrane segment at 202–222 threads the bilayer; the sequence is WVFWIGPLVGAILGSLLYNYV. Topologically, residues 223–271 are cytoplasmic; that stretch reads LFPPAKSLSERLAVLKGLEPDTDWEEREVRRRQSVELHSPQSLPRGTKA. The segment at 248–271 is disordered; the sequence is EREVRRRQSVELHSPQSLPRGTKA. Serine 256 carries the post-translational modification Phosphoserine; by PKA. The segment covering 261–271 has biased composition (polar residues); it reads SPQSLPRGTKA.

Belongs to the MIP/aquaporin (TC 1.A.8) family. In terms of assembly, homotetramer. Interacts with micropeptide MIAC; the interaction leads to a reduction of filamentous actin fibers and inhibition of the EREG/EGFR signaling pathway. In terms of processing, ser-256 phosphorylation is necessary and sufficient for expression at the apical membrane. Endocytosis is not phosphorylation-dependent. Post-translationally, N-glycosylated. Expressed in collecting tubules in kidney medulla (at protein level). Detected in kidney.

The protein localises to the apical cell membrane. Its subcellular location is the basolateral cell membrane. It is found in the cell membrane. It localises to the cytoplasmic vesicle membrane. The protein resides in the golgi apparatus. The protein localises to the trans-Golgi network membrane. The enzyme catalyses H2O(in) = H2O(out). It catalyses the reaction glycerol(in) = glycerol(out). In terms of biological role, forms a water-specific channel that provides the plasma membranes of renal collecting duct with high permeability to water, thereby permitting water to move in the direction of an osmotic gradient. Plays an essential role in renal water homeostasis. Could also be permeable to glycerol. The sequence is that of Aquaporin-2 from Homo sapiens (Human).